Here is a 161-residue protein sequence, read N- to C-terminus: Regulator of ribonuclease activity A (161 aa).

Belongs to the RraA family. Homotrimer. Binds to both RNA-binding sites in the C-terminal region of Rne and to RhlB.

The protein resides in the cytoplasm. Functionally, globally modulates RNA abundance by binding to RNase E (Rne) and regulating its endonucleolytic activity. Can modulate Rne action in a substrate-dependent manner by altering the composition of the degradosome. Modulates RNA-binding and helicase activities of the degradosome. This Citrobacter koseri (strain ATCC BAA-895 / CDC 4225-83 / SGSC4696) protein is Regulator of ribonuclease activity A.